Here is a 946-residue protein sequence, read N- to C-terminus: Structure-specific endonuclease subunit SLX4 (946 aa).

Pro residues predominate over residues 1–14; the sequence is MPASPLPALSPPAS. 7 disordered regions span residues 1–35, 54–119, 147–318, 339–399, 416–471, 577–748, and 765–799; these read MPAS…IPPD, QHFD…EEAV, PSDE…GGFT, ADSA…AAQL, TKVP…PKHI, FPLL…GSGR, and ALSP…KADS. Over residues 54 to 74 the composition is skewed to basic and acidic residues; sequence QHFDDDIAGKDQEQSRKKSPE. Composition is skewed to basic residues over residues 160–169 and 182–195; these read KAGKPRKPRA and KPKR…KAAK. Residues 278–287 are compositionally biased toward basic and acidic residues; that stretch reads AVSRRRDWTP. The span at 453–469 shows a compositional bias: basic residues; the sequence is SKARSKKASTKAAAKPK. A compositionally biased stretch (basic and acidic residues) spans 627–636; the sequence is KANDEPDHVM. Residues 707-717 show a composition bias toward polar residues; the sequence is KSQSAIATSGS. Positions 722–733 are enriched in basic and acidic residues; that stretch reads KEPKRTKGKEVK.

Belongs to the SLX4 family. In terms of assembly, forms a heterodimer with SLX1. Post-translationally, phosphorylated in response to DNA damage.

It localises to the nucleus. Functionally, regulatory subunit of the SLX1-SLX4 structure-specific endonuclease that resolves DNA secondary structures generated during DNA repair and recombination. Has endonuclease activity towards branched DNA substrates, introducing single-strand cuts in duplex DNA close to junctions with ss-DNA. This is Structure-specific endonuclease subunit SLX4 from Phaeosphaeria nodorum (strain SN15 / ATCC MYA-4574 / FGSC 10173) (Glume blotch fungus).